Here is a 284-residue protein sequence, read N- to C-terminus: L-ribulose-5-phosphate 3-epimerase UlaE (284 aa).

The protein belongs to the L-ribulose-5-phosphate 3-epimerase family.

It carries out the reaction L-ribulose 5-phosphate = L-xylulose 5-phosphate. It functions in the pathway cofactor degradation; L-ascorbate degradation; D-xylulose 5-phosphate from L-ascorbate: step 3/4. Functionally, catalyzes the isomerization of L-xylulose-5-phosphate to L-ribulose-5-phosphate. Is involved in the anaerobic L-ascorbate utilization. This chain is L-ribulose-5-phosphate 3-epimerase UlaE, found in Salmonella typhimurium (strain LT2 / SGSC1412 / ATCC 700720).